We begin with the raw amino-acid sequence, 1007 residues long: Glutamate receptor ionotropic, delta-2 (1007 aa).

The first 23 residues, 1–23, serve as a signal peptide directing secretion; sequence MEVFPLLFFLSFWWSRTWDLATS. The tract at residues 24-345 is interaction with CBLN1 homotrimer; that stretch reads DSIIHIGAIF…NAFHKKLEDR (322 aa). At 24-566 the chain is on the extracellular side; that stretch reads DSIIHIGAIF…DMFACLAPFD (543 aa). 3 cysteine pairs are disulfide-bonded: cysteine 83–cysteine 355, cysteine 99–cysteine 131, and cysteine 298–cysteine 310. An N-linked (GlcNAc...) asparagine glycan is attached at asparagine 293. The N-linked (GlcNAc...) asparagine glycan is linked to asparagine 426. A helical transmembrane segment spans residues 567–587; that stretch reads LSLWACIAGTVLLVGLLVYLL. Over 588 to 635 the chain is Cytoplasmic; the sequence is NWLNPPRLQMGSMTSTTLYNSMWFVYGSFVQQGGEVPYTTLATRMMMG. The helical transmembrane segment at 636-656 threads the bilayer; sequence AWWLFALIVISSYTANLAAFL. Residues 657–830 are Extracellular-facing; the sequence is TITRIESSIQ…QKGGALDIKS (174 aa). 2 N-linked (GlcNAc...) asparagine glycosylation sites follow: asparagine 713 and asparagine 716. Residues 831–851 form a helical membrane-spanning segment; that stretch reads LAGVFCILAAGIVLSCLIAVL. At 852-1007 the chain is on the cytoplasmic side; that stretch reads ETWWSRRKGS…GNDPDRGTSI (156 aa). At serine 883 the chain carries Phosphoserine. Phosphothreonine is present on threonine 886. Serine 890 carries the phosphoserine modification. Positions 921–991 are interaction with AP4M1; sequence DFRNTHITTT…MSSIPYQPTP (71 aa). The PDZ-binding signature appears at 1005 to 1007; that stretch reads TSI. Serine 1006 carries the phosphoserine modification.

Belongs to the glutamate-gated ion channel (TC 1.A.10.1) family. GRID2 subfamily. Tetramer; dimer of dimers. Interacts with AP4M1. Interacts with EML2. Interacts with MAGI2 (via PDZ domains). Interacts with BECN1, GOPC, GRID2IP, SHANK1 and SHANK2. Interacts with CBLN2, but not with CBLN4. Interacts with CBLN1 (via C1q domain); the interaction is CBLN1-NRX1 complex formation-dependent; CBLN1-binding is calcium-independent; CBLN1 hexamers anchor GRID2 N-terminal domain dimers to monomeric NRXN1 isoform beta; promotes synaptogenesis and mediates the D-Serine-dependent long term depression signals and AMPA receptor endocytosis. As to expression, expressed at high levels in the cerebellar Purkinje cell layer, almost absent in the forebrain.

It is found in the postsynaptic cell membrane. It catalyses the reaction Ca(2+)(in) = Ca(2+)(out). It carries out the reaction Na(+)(in) = Na(+)(out). Functionally, member of the ionotropic glutamate receptor family, which plays a crucial role in synaptic organization and signal transduction in the central nervous system. Although it shares structural features with ionotropic glutamate receptors, does not bind glutamate as a primary ligand. Promotes synaptogenesis and mediates the D-Serine-dependent long term depression signals and AMPA receptor endocytosis of cerebellar parallel fiber-Purkinje cell (PF-PC) synapses through the NRX1B-CBLN1-GRID2 triad complex. In the presence of neurexins and cerebellins, forms cation-selective channels that are proposed to be gated by glycine and D-serine. However, recent research disputes this ligand-gated cation channel activity. Cation-selective ion channel activity can be triggered by GRM1 in Purkinje cells. In Rattus norvegicus (Rat), this protein is Glutamate receptor ionotropic, delta-2 (Grid2).